A 241-amino-acid polypeptide reads, in one-letter code: Phosphatidylcholine synthase (241 aa).

At Met-1–Arg-15 the chain is on the cytoplasmic side. Residues Ala-16–Ala-36 form a helical membrane-spanning segment. Residues Ala-37–Arg-41 are Periplasmic-facing. The helical transmembrane segment at Phe-42–Ile-62 threads the bilayer. The Cytoplasmic segment spans residues Ala-63 to Ser-76. Residues Gly-77–Leu-97 traverse the membrane as a helical segment. The Periplasmic segment spans residues Tyr-98–Ser-100. A helical membrane pass occupies residues Gly-101–Ile-121. Over Tyr-122–Tyr-133 the chain is Cytoplasmic. Residues Phe-134 to Ala-154 traverse the membrane as a helical segment. The Periplasmic segment spans residues Ser-155–Glu-156. A helical membrane pass occupies residues Val-157–Leu-177. The Cytoplasmic segment spans residues His-178–Pro-187. The chain crosses the membrane as a helical span at residues Leu-188 to Phe-208. Over Glu-209–Pro-211 the chain is Periplasmic. A helical membrane pass occupies residues Pro-212–Leu-232. At Gln-233–Ala-241 the chain is on the cytoplasmic side.

It belongs to the CDP-alcohol phosphatidyltransferase class-I family. It depends on Mn(2+) as a cofactor.

The protein resides in the cell inner membrane. The catalysed reaction is a CDP-1,2-diacyl-sn-glycerol + choline = a 1,2-diacyl-sn-glycero-3-phosphocholine + CMP + H(+). Its activity is regulated as follows. Activated by CDP-diacylglycerol especially in the presence of Triton X-100 (0.1% w/v) at concentrations where micelles are formed. Maximal activation by Triton X-100 at 0.2% w/v, but higher concentrations become inhibitory. Inhibited by EDTA and high concentrations of choline. In terms of biological role, condenses choline with CDP-diglyceride to produce phosphatidylcholine and CMP. The sequence is that of Phosphatidylcholine synthase (pcs) from Rhizobium meliloti (strain 1021) (Ensifer meliloti).